A 510-amino-acid polypeptide reads, in one-letter code: Solute carrier family 2, facilitated glucose transporter member 2 (510 aa).

Residues 1-10 (MTEDKVTGTL) lie on the Cytoplasmic side of the membrane. Residues 11–31 (VLAVFTAVLSSFQFGYDIGVI) form a helical membrane-spanning segment. At 32–96 (NAPQQVIITH…SASLITMFWS (65 aa)) the chain is on the extracellular side. N62 carries N-linked (GlcNAc...) asparagine glycosylation. Residues 97–117 (LSVSSFAVGGMIASFFGGLLG) form a helical membrane-spanning segment. Over 118-122 (DKLGR) the chain is Cytoplasmic. Residues 123-143 (IKALLVANILSLVGALLMGFS) form a helical membrane-spanning segment. Residues 144 to 157 (KLGPSHILIISGRG) are Extracellular-facing. A helical transmembrane segment spans residues 158–178 (ISGLYCGLISGLIPMYIGEIA). Over 179 to 191 (PTTLRGAIGALHQ) the chain is Cytoplasmic. Q191 is a binding site for D-glucose. A helical membrane pass occupies residues 192-212 (LAIVTGILISQIVGLDFILGN). Topologically, residues 213-215 (HEL) are extracellular. Residues 216 to 236 (WHILLGLSAVPAILQCLLLFF) traverse the membrane as a helical segment. The Cytoplasmic portion of the chain corresponds to 237-301 (CPESPRYLYI…LFTNASYRQP (65 aa)). A helical transmembrane segment spans residues 302–322 (ILVALMLHAAQQFSGINGIFY). D-glucose is bound by residues 312–313 (QQ) and N318. Residues 323 to 336 (YSTSIFQTAGISQP) are Extracellular-facing. Residues 337–357 (VYATIGVGAVNTVFTAVSVFL) traverse the membrane as a helical segment. N347 lines the D-glucose pocket. At 358–365 (VEKAGRRS) the chain is on the cytoplasmic side. The helical transmembrane segment at 366 to 386 (LFLIGMSGMFVCAIFMSVGLV) threads the bilayer. Residues 387–400 (LLSKFPWMNYVSMT) are Extracellular-facing. A helical membrane pass occupies residues 401 to 421 (AIFLFVSFFEIGPGPIPWFMV). D-glucose-binding residues include E410 and W418. Topologically, residues 422–431 (AEFFSQGPRP) are cytoplasmic. A helical transmembrane segment spans residues 432-452 (AALAIAAFSNWTGNFIIALCF). At 453–454 (QY) the chain is on the extracellular side. Residues 455 to 475 (IADFCGPYVFFLLLVWSWPLF) form a helical membrane-spanning segment. At 476–510 (CSHFLKFQKPKENPLRKSQQSSERRGVQLKRQKLL) the chain is on the cytoplasmic side. A disordered region spans residues 490–510 (LRKSQQSSERRGVQLKRQKLL).

Belongs to the major facilitator superfamily. Sugar transporter (TC 2.A.1.1) family. Glucose transporter subfamily. In terms of processing, N-glycosylated; required for stability and retention at the cell surface of pancreatic beta cells.

The protein localises to the cell membrane. The catalysed reaction is D-glucose(out) = D-glucose(in). The enzyme catalyses D-fructose(out) = D-fructose(in). It carries out the reaction L-dehydroascorbate(out) = L-dehydroascorbate(in). It catalyses the reaction D-galactose(in) = D-galactose(out). With respect to regulation, D-glucose and maltose competitively inhibit fructose transport. D-glucose, D-fructose and maltose inhibit deoxyglucose transport. Its function is as follows. Facilitative hexose transporter that mediates the transport of glucose, fructose and galactose. Likely mediates the bidirectional transfer of glucose across the plasma membrane of hepatocytes and is responsible for uptake of glucose by the beta cells; may comprise part of the glucose-sensing mechanism of the beta cell. May also participate with the Na(+)/glucose cotransporter in the transcellular transport of glucose in the small intestine and kidney. Also able to mediate the transport of dehydroascorbate. The polypeptide is Solute carrier family 2, facilitated glucose transporter member 2 (Bos taurus (Bovine)).